A 101-amino-acid polypeptide reads, in one-letter code: Large ribosomal subunit protein uL24 (101 aa).

The protein belongs to the universal ribosomal protein uL24 family. As to quaternary structure, part of the 50S ribosomal subunit.

In terms of biological role, one of two assembly initiator proteins, it binds directly to the 5'-end of the 23S rRNA, where it nucleates assembly of the 50S subunit. One of the proteins that surrounds the polypeptide exit tunnel on the outside of the subunit. This is Large ribosomal subunit protein uL24 from Borrelia hermsii (strain HS1 / DAH).